Consider the following 396-residue polypeptide: Elongation factor Tu (396 aa).

The region spanning 10–205 (KPHVNIGTIG…AVDESIPDPV (196 aa)) is the tr-type G domain. The interval 19-26 (GHVDHGKT) is G1. 19 to 26 (GHVDHGKT) provides a ligand contact to GTP. Thr26 contributes to the Mg(2+) binding site. Positions 62–66 (GITIN) are G2. The tract at residues 83-86 (DAPG) is G3. Residues 83-87 (DAPGH) and 138-141 (NKAD) contribute to the GTP site. The segment at 138-141 (NKAD) is G4. A G5 region spans residues 175–177 (SGL).

The protein belongs to the TRAFAC class translation factor GTPase superfamily. Classic translation factor GTPase family. EF-Tu/EF-1A subfamily. In terms of assembly, monomer.

It is found in the cytoplasm. The enzyme catalyses GTP + H2O = GDP + phosphate + H(+). In terms of biological role, GTP hydrolase that promotes the GTP-dependent binding of aminoacyl-tRNA to the A-site of ribosomes during protein biosynthesis. The chain is Elongation factor Tu from Nocardia farcinica (strain IFM 10152).